A 98-amino-acid chain; its full sequence is NADH-ubiquinone oxidoreductase chain 4L (98 aa).

3 helical membrane passes run 1–21 (MPVVYVNIFLAFIVSLVGLLI), 29–49 (SLLCLEGMMLSLFVMLTVTVL), and 61–81 (IILLVFAACEAALGLSLLVMV).

Belongs to the complex I subunit 4L family. As to quaternary structure, core subunit of respiratory chain NADH dehydrogenase (Complex I) which is composed of 45 different subunits.

The protein localises to the mitochondrion inner membrane. The enzyme catalyses a ubiquinone + NADH + 5 H(+)(in) = a ubiquinol + NAD(+) + 4 H(+)(out). Its function is as follows. Core subunit of the mitochondrial membrane respiratory chain NADH dehydrogenase (Complex I) which catalyzes electron transfer from NADH through the respiratory chain, using ubiquinone as an electron acceptor. Part of the enzyme membrane arm which is embedded in the lipid bilayer and involved in proton translocation. This is NADH-ubiquinone oxidoreductase chain 4L (MT-ND4L) from Ursus maritimus (Polar bear).